A 286-amino-acid chain; its full sequence is Thiazole synthase (286 aa).

Residue Lys122 is the Schiff-base intermediate with DXP of the active site. 1-deoxy-D-xylulose 5-phosphate-binding positions include Gly183, 209–210 (AG), and 231–232 (NT).

This sequence belongs to the ThiG family. Homotetramer. Forms heterodimers with either ThiH or ThiS.

Its subcellular location is the cytoplasm. The enzyme catalyses [ThiS sulfur-carrier protein]-C-terminal-Gly-aminoethanethioate + 2-iminoacetate + 1-deoxy-D-xylulose 5-phosphate = [ThiS sulfur-carrier protein]-C-terminal Gly-Gly + 2-[(2R,5Z)-2-carboxy-4-methylthiazol-5(2H)-ylidene]ethyl phosphate + 2 H2O + H(+). It participates in cofactor biosynthesis; thiamine diphosphate biosynthesis. Catalyzes the rearrangement of 1-deoxy-D-xylulose 5-phosphate (DXP) to produce the thiazole phosphate moiety of thiamine. Sulfur is provided by the thiocarboxylate moiety of the carrier protein ThiS. In vitro, sulfur can be provided by H(2)S. The sequence is that of Thiazole synthase from Synechococcus elongatus (strain ATCC 33912 / PCC 7942 / FACHB-805) (Anacystis nidulans R2).